The following is a 561-amino-acid chain: Rho guanine nucleotide exchange factor 9 (561 aa).

Residues 53–112 (DSIVSAEAVWDHVTMANRELAFKAGDVIKVLDASNKDWWWGQIDDEEGWFPASFVRLWVN) form the SH3 domain. Residues 145–155 (RDQMRANVINE) are interaction with GPHN. The 185-residue stretch at 148 to 332 (MRANVINEIM…RNVTQQINER (185 aa)) folds into the DH domain. The region spanning 363–470 (ELIYTGEMAW…WLRAFREERK (108 aa)) is the PH domain. A disordered region spans residues 499-524 (KQKGVNSARSVPPSYPPPQDPLNQGQ). Serine 547 is subject to Phosphoserine.

Interacts with GPHN.

Its subcellular location is the cytoplasm. The protein localises to the postsynaptic density. Functionally, acts as a guanine nucleotide exchange factor (GEF) for CDC42. Promotes formation of GPHN clusters. The chain is Rho guanine nucleotide exchange factor 9 (ARHGEF9) from Bos taurus (Bovine).